The following is a 218-amino-acid chain: Glycerol-3-phosphate acyltransferase (218 aa).

The next 5 membrane-spanning stretches (helical) occupy residues 5–25, 53–73, 80–100, 115–135, and 138–158; these read ALGM…ILIC, LAAA…VWLA, PFYL…PVFF, IAAI…LTVL, and GYSS…VWWF.

This sequence belongs to the PlsY family. As to quaternary structure, probably interacts with PlsX.

It is found in the cell inner membrane. It catalyses the reaction an acyl phosphate + sn-glycerol 3-phosphate = a 1-acyl-sn-glycero-3-phosphate + phosphate. It functions in the pathway lipid metabolism; phospholipid metabolism. Functionally, catalyzes the transfer of an acyl group from acyl-phosphate (acyl-PO(4)) to glycerol-3-phosphate (G3P) to form lysophosphatidic acid (LPA). This enzyme utilizes acyl-phosphate as fatty acyl donor, but not acyl-CoA or acyl-ACP. This is Glycerol-3-phosphate acyltransferase from Proteus mirabilis (strain HI4320).